We begin with the raw amino-acid sequence, 760 residues long: U-box domain-containing protein 3 (760 aa).

Positions 146–217 (LMELMENALR…EQTEQLIELV (72 aa)) form a coiled coil. Residues 237-311 (SIPPYFRCPL…ASWLEANRIN (75 aa)) form the U-box domain. Over residues 424–434 (ILGNHQSSSEM) the composition is skewed to polar residues. The interval 424 to 448 (ILGNHQSSSEMSPKKNLESSNNVNH) is disordered. 5 ARM repeats span residues 504–543 (IENR…NLSI), 545–584 (ELNK…SLSV), 586–626 (QVNR…NLSI), 628–666 (HDNK…NLSA), and 668–707 (GEGR…QLCL).

It carries out the reaction S-ubiquitinyl-[E2 ubiquitin-conjugating enzyme]-L-cysteine + [acceptor protein]-L-lysine = [E2 ubiquitin-conjugating enzyme]-L-cysteine + N(6)-ubiquitinyl-[acceptor protein]-L-lysine.. Its pathway is protein modification; protein ubiquitination. Its function is as follows. Functions as an E3 ubiquitin ligase. The sequence is that of U-box domain-containing protein 3 (PUB3) from Arabidopsis thaliana (Mouse-ear cress).